Here is a 230-residue protein sequence, read N- to C-terminus: RING finger protein 141 (230 aa).

G2 carries the N-myristoyl glycine lipid modification. The RING-type zinc-finger motif lies at 155 to 192 (CCICMDGRADLILPCAHSFCQKCIDKWSDRHRNCPICR).

As to expression, isoform 1 is testis-specific. Isoform 2 is expressed in heart, brain, skeletal muscle, kidney, pancreas, lung, liver and testis. Isoform 3 is expressed in heart, liver, and kidney.

It localises to the membrane. May be involved in spermatogenesis. This chain is RING finger protein 141 (Rnf141), found in Mus musculus (Mouse).